The primary structure comprises 630 residues: Pentatricopeptide repeat-containing protein At1g26460, mitochondrial (630 aa).

The N-terminal 115 residues, 1 to 115 (MASHLFTRSR…RALSETLDMN (115 aa)), are a transit peptide targeting the mitochondrion. A disordered region spans residues 42 to 79 (LLATESTDHDPSNHQSTSTPLPPNPATGSPLYQENWRS). Polar residues predominate over residues 67–77 (ATGSPLYQENW). 6 PPR repeats span residues 154–189 (DVNL…SVEP), 190–224 (NTAS…GKDS), 227–261 (DDES…GYML), 468–503 (SVAA…GLTP), 504–538 (NIDS…GVKP), and 539–573 (DSRT…GFEP).

This sequence belongs to the PPR family. P subfamily.

The protein localises to the mitochondrion. The polypeptide is Pentatricopeptide repeat-containing protein At1g26460, mitochondrial (Arabidopsis thaliana (Mouse-ear cress)).